Here is a 270-residue protein sequence, read N- to C-terminus: Acyl-[acyl-carrier-protein]--UDP-N-acetylglucosamine O-acyltransferase (270 aa).

This sequence belongs to the transferase hexapeptide repeat family. LpxA subfamily. As to quaternary structure, homotrimer.

The protein resides in the cytoplasm. It catalyses the reaction a (3R)-hydroxyacyl-[ACP] + UDP-N-acetyl-alpha-D-glucosamine = a UDP-3-O-[(3R)-3-hydroxyacyl]-N-acetyl-alpha-D-glucosamine + holo-[ACP]. It participates in glycolipid biosynthesis; lipid IV(A) biosynthesis; lipid IV(A) from (3R)-3-hydroxytetradecanoyl-[acyl-carrier-protein] and UDP-N-acetyl-alpha-D-glucosamine: step 1/6. Its function is as follows. Involved in the biosynthesis of lipid A, a phosphorylated glycolipid that anchors the lipopolysaccharide to the outer membrane of the cell. The protein is Acyl-[acyl-carrier-protein]--UDP-N-acetylglucosamine O-acyltransferase of Helicobacter pylori (strain HPAG1).